A 207-amino-acid chain; its full sequence is M-zodatoxin-Lt4a (207 aa).

The signal sequence occupies residues 1–22; sequence MKFSIIALALAVAFVCVAESRS. Residues 23–43 constitute a propeptide that is removed on maturation; that stretch reads EEEGYDVSEEIQAEELEEAER. Residues 40 to 43 carry the Processing quadruplet motif 1 motif; that stretch reads EAER. Q61 carries the glutamine amide modification. The short motif at 63-66 is the Inverted processing quadruplet motif 1 element; the sequence is REDS. Positions 63–71 are excised as a propeptide; it reads REDSEEAGR. The Processing quadruplet motif 2 motif lies at 68–71; the sequence is EAGR. A Glutamine amide modification is found at Q89. An Inverted processing quadruplet motif 2 motif is present at residues 91–94; that stretch reads REDS. Positions 91–99 are excised as a propeptide; it reads REDSEEAGR. Residues 96-99 carry the Processing quadruplet motif 3 motif; that stretch reads EAGR. Glutamine amide is present on Q117. The Inverted processing quadruplet motif 3 motif lies at 119-122; it reads REDS. The propeptide occupies 119–127; the sequence is REDSEEAGR. The Processing quadruplet motif 4 motif lies at 124 to 127; that stretch reads EAGR. Residue Q145 is modified to Glutamine amide. An Inverted processing quadruplet motif 4 motif is present at residues 147 to 150; it reads REDS. Positions 147–155 are excised as a propeptide; that stretch reads REDSEEAGR. Residues 152–155 carry the Processing quadruplet motif 5 motif; that stretch reads EAGR. The residue at position 173 (Q173) is a Glutamine amide. Positions 175-178 match the Inverted processing quadruplet motif 5 motif; that stretch reads REDT. Residues 175 to 182 constitute a propeptide that is removed on maturation; the sequence is REDTEEAR. The short motif at 179 to 182 is the Processing quadruplet motif 6 element; the sequence is EEAR. Phenylalanine amide is present on F206.

This sequence belongs to the cationic peptide 03 (latarcin) family. 04 subfamily. Cleavage of the propeptide depends on the processing quadruplet motif (PQM) (XXXR, with at least one of X being E) and the inverted PQM (RXXX, with at least one of X being E). Expressed by the venom gland.

It localises to the secreted. Functionally, M-zodatoxin-Lt4a: Has antimicrobial activity against Gram-positive bacteria (A.globiformis VKM Ac-1112 (MIC=0.3 uM), and B.subtilis VKM B-501 (MIC=1.1 uM)), Gram-negative bacteria (E.coli DH5-alpha (MIC=4.5 uM), E.coli MH1 (MIC=3.2 uM), and P.aeruginosa PAO1 (MIC&gt;35 uM)), and yeasts (P.pastoris GS115 (MIC=36 uM), and S.cerevisiae Y190 (MIC=18 uM)). Does not have hemolytic activity against rabbit erythrocytes. Causes paralysis, but is not lethal when injected into insect (M.domestica) larvae. Shows no antimicrobial activity against Gram-positive bacterium B.subtilis B-501 or Gram-negative bacterium E.coli DH5-alpha at concentrations up to 20 uM. In terms of biological role, shows no antimicrobial activity against Gram-positive bacterium B.subtilis B-501 or Gram-negative bacterium E.coli DH5-alpha at concentrations up to 20 uM. Shows no toxicity towards insect (S.carnaria) larvae. The sequence is that of M-zodatoxin-Lt4a from Lachesana tarabaevi (Spider).